The primary structure comprises 545 residues: MATNYIFVTGGVVSSLGKGIAAASLAAILEARGLNVTIMKLDPYINVDPGTMSPTQHGEVFVTQDGAETDLDLGHYERFIRTKMTKRNNFTTGKIYSEVLRKERRGDYLGATIQVIPHITNEIKDRVIAGAQGHDVVIVEVGGTVGDIESLPFLEALRQLAVQVGREHTLFMHLTLVPYIPTAGEVKTKPTQHSVKELLSIGIQPDVLICRSDRMIPPNERAKIALFCNVAERAVISLKDVNSIYQIPALLKSQGLDDFVCERFRLTCPEADLTEWEQVLYKQANPVGEVTIGMVGKYTELPDAYKSVNEALKHAGLTNRLSVNIKYIDSQDVETKGVEVLKGVDGILVPGGFGYRGVEGKIRTAQYARENKIPYLGICLGMQIALIEYARNVAGLTKANSSEFDKDCEQPVVALITEWQDAEGNTEVRTDESDLGGTMRLGAQQCHLVSGSRARELYGKETIEERHRHRYEVNNTLLPQIEKAGLKVTGLSADKKLVEIIEVPNHPWFVACQFHPEFTSTPRDGHPLFAGFVKAAYENHKKSVK.

Residues 1 to 266 form an amidoligase domain region; it reads MATNYIFVTG…DDFVCERFRL (266 aa). Ser-14 contributes to the CTP binding site. Ser-14 serves as a coordination point for UTP. Residues 15 to 20 and Asp-72 contribute to the ATP site; that span reads SLGKGI. 2 residues coordinate Mg(2+): Asp-72 and Glu-140. Residues 147 to 149, 187 to 192, and Lys-223 contribute to the CTP site; these read DIE and KTKPTQ. UTP is bound by residues 187–192 and Lys-223; that span reads KTKPTQ. 239 to 241 contributes to the ATP binding site; that stretch reads KDV. The Glutamine amidotransferase type-1 domain maps to 291-542; it reads TIGMVGKYTE…VKAAYENHKK (252 aa). Position 352 (Gly-352) interacts with L-glutamine. Cys-379 acts as the Nucleophile; for glutamine hydrolysis in catalysis. L-glutamine-binding positions include 380–383, Glu-403, and Arg-470; that span reads LGMQ. Catalysis depends on residues His-515 and Glu-517.

It belongs to the CTP synthase family. In terms of assembly, homotetramer.

The catalysed reaction is UTP + L-glutamine + ATP + H2O = CTP + L-glutamate + ADP + phosphate + 2 H(+). It carries out the reaction L-glutamine + H2O = L-glutamate + NH4(+). The enzyme catalyses UTP + NH4(+) + ATP = CTP + ADP + phosphate + 2 H(+). It functions in the pathway pyrimidine metabolism; CTP biosynthesis via de novo pathway; CTP from UDP: step 2/2. Its activity is regulated as follows. Allosterically activated by GTP, when glutamine is the substrate; GTP has no effect on the reaction when ammonia is the substrate. The allosteric effector GTP functions by stabilizing the protein conformation that binds the tetrahedral intermediate(s) formed during glutamine hydrolysis. Inhibited by the product CTP, via allosteric rather than competitive inhibition. Its function is as follows. Catalyzes the ATP-dependent amination of UTP to CTP with either L-glutamine or ammonia as the source of nitrogen. Regulates intracellular CTP levels through interactions with the four ribonucleotide triphosphates. This Haemophilus influenzae (strain PittGG) protein is CTP synthase.